The sequence spans 438 residues: MCKDYVYDIDIEQIAKEEQGEALKLQASTSTEVSQQQCSVPGLGEKYPTWETTKPELELLGHNPRRRRIASSFTIGLRGLINLGNTCFMNCIVQALTHTPILRDFFLSDRHRCEMPSPELCLVCEMSSLFRELYSGNPSPHVPYKLLHLVWIHARHLAGYRQQDAHEFLIAALDVLHRHCKGDDVGKVASNPNHCNCIIDQIFTGGLQSDVTCQACHGVSTTIDPCWDISLDLPGSCTSFWPMSPGRESSLNGESHIPGITTLTDCLRRFTRPEHLGSSAKIKCGSCQSYQESTKQLTMKKLPVVACFHFKRFEHSAKQRRKITTYISFPLELDMTPFMASSKETRVNGQLQLPTNSANNENKYSLFAVVNHQGTLESGHYTSFIRHHRDQWFKCDDAVITKASIKDVLDSEGYLLFYHKQVLEPEPEKVKEMTPQAY.

Residues 78–421 (RGLINLGNTC…EGYLLFYHKQ (344 aa)) form the USP domain. C87 serves as the catalytic Nucleophile. H380 acts as the Proton acceptor in catalysis.

This sequence belongs to the peptidase C19 family. In terms of assembly, interacts with phosphorylated BCL2L11 isoform BIMEL; this interaction leads to BCL2L11 deubiquitination and stabilization.

The protein resides in the cytoplasm. The protein localises to the cytosol. It is found in the nucleus. The catalysed reaction is Thiol-dependent hydrolysis of ester, thioester, amide, peptide and isopeptide bonds formed by the C-terminal Gly of ubiquitin (a 76-residue protein attached to proteins as an intracellular targeting signal).. Deubiquitinase involved in innate antiviral immunity by mediating deubiquitination of CGAS and RIGI. Negatively regulates RIGI by mediating 'Lys-63'-linked deubiquitination of RIGI, inhibiting type I interferon signaling. Also regulates 'Lys-63'-linked ubiquitination level of MDA5/IFIH1. Acts as a positive regulator of the cGAS-STING pathway by catalyzing 'Lys-48'-linked deubiquitination of CGAS, thereby promoting its stabilization. Can reduce the levels of BCL2L11/BIM ubiquitination and stabilize BCL2L11 in response to the RAF-MAPK-degradation signal. By acting on BCL2L11 levels, may counteract the anti-apoptotic effects of MAPK activity. This is Ubiquitin carboxyl-terminal hydrolase 27 from Mus musculus (Mouse).